The following is a 493-amino-acid chain: Galactose-1-phosphate uridylyltransferase (493 aa).

This sequence belongs to the galactose-1-phosphate uridylyltransferase type 2 family.

The protein resides in the cytoplasm. It carries out the reaction alpha-D-galactose 1-phosphate + UDP-alpha-D-glucose = alpha-D-glucose 1-phosphate + UDP-alpha-D-galactose. It functions in the pathway carbohydrate metabolism; galactose metabolism. The chain is Galactose-1-phosphate uridylyltransferase (galT) from Lactococcus lactis subsp. lactis (strain IL1403) (Streptococcus lactis).